The sequence spans 917 residues: MADEALAGLDEGALRKLLEVTADLAERRRIRSAIRELQRQELEREEEALASKRFRAERQDNKENWLHSQQREAEQRAALARLAGQLESMNDVEELTALLRSAGEYEERKLIRAAIRRVRAQEIEAATLAGRLYSGRPNSGSREDSKGLAAHRLEQCEVPEREEQEQQAEVSKPTPTPEGTSQDVTTVTLLLRAPPGSTSSSPASPSSSPTPASPEPPLEPAEAQCLTAEVPGSPEPPPSPPKTTSPEPQESPTLPSTEGQVVNKLLSGPKETPAAQSPTRGPSDTKRADVAGPRPCQRSLSVLSPRQPAQNRESTPLASGPSSFQRAGSVRDRVHKFTSDSPMAARLQDGTPQAALSPLTPARLLGPSLTSTTPASSSSGSSSRGPSDTSSRFSKEQRGVAQPLAQLRSCPQEEGPRGRGLAARPLENRAGGPVARSEEPGAPLPVAVGTAEPGGSMKTTFTIEIKDGRGQASTGRVLLPTGNQRAELTLGLRAPPTLLSTSSGGKSTITRVNSPGTLARLGSVTHVTSFSHAPPSSRGGCSIKMEAEPAEPLAAAVEAANGAEQTRVNKAPEGRSPLSAEELMTIEDEGVLDKMLDQSTDFEERKLIRAALRELRQRKRDQRDKERERRLQEARGRPGEGRGNTATETTTRHSQRAADGSAVSTVTKTERLVHSNDGTRTARTTTVESSFVRRSENGSGSTMMQTKTFSSSSSSKKMGSIFDREDQASPRAGSLAALEKRQAEKKKELMKAQSLPKTSASQARKAMIEKLEKEGAAGSPGGPRAAVQRSTSFGVPNANSIKQMLLDWCRAKTRGYEHVDIQNFSSSWSDGMAFCALVHNFFPEAFDYGQLSPQNRRQNFEVAFSSAEMLVDCVPLVEVDDMMIMGKKPDPKCVFTYVQSLYNHLRRHELRLRGKNV.

Ala-2 is modified (N-acetylalanine). Residues 24–89 (LAERRRIRSA…ARLAGQLESM (66 aa)) adopt a coiled-coil conformation. A disordered region spans residues 157–456 (EVPEREEQEQ…AVGTAEPGGS (300 aa)). Positions 177–188 (PEGTSQDVTTVT) are enriched in polar residues. 2 stretches are compositionally biased toward low complexity: residues 193 to 210 (APPG…SSPT) and 220 to 232 (PAEA…EVPG). Positions 233-243 (SPEPPPSPPKT) are enriched in pro residues. Over residues 244 to 258 (TSPEPQESPTLPSTE) the composition is skewed to low complexity. The span at 298-326 (RSLSVLSPRQPAQNRESTPLASGPSSFQR) shows a compositional bias: polar residues. Phosphoserine is present on residues Ser-299, Ser-301, and Ser-304. Residues 329–338 (SVRDRVHKFT) are compositionally biased toward basic and acidic residues. Ser-341 carries the phosphoserine modification. Thr-351 is modified (phosphothreonine). Ser-357 bears the Phosphoserine mark. Phosphothreonine is present on residues Thr-360 and Thr-373. A compositionally biased stretch (low complexity) spans 363-392 (RLLGPSLTSTTPASSSSGSSSRGPSDTSSR). A phosphoserine mark is found at Ser-503, Ser-514, Ser-523, and Ser-576. Disordered regions lie at residues 560 to 580 (ANGA…PLSA) and 617 to 767 (QRKR…RKAM). Residues 603-630 (EERKLIRAALRELRQRKRDQRDKERERR) are a coiled coil. The segment covering 617 to 640 (QRKRDQRDKERERRLQEARGRPGE) has biased composition (basic and acidic residues). Residues 676 to 689 (NDGTRTARTTTVES) are compositionally biased toward polar residues. A compositionally biased stretch (low complexity) spans 701 to 720 (STMMQTKTFSSSSSSKKMGS). Ser-729 carries the post-translational modification Phosphoserine. Basic and acidic residues predominate over residues 738-750 (LEKRQAEKKKELM). Ser-792 is subject to Phosphoserine. The Calponin-homology (CH) domain maps to 799 to 906 (NSIKQMLLDW…YVQSLYNHLR (108 aa)).

Belongs to the smoothelin family. In terms of tissue distribution, smooth muscle; contractile or vascular (for the long form).

It is found in the cytoplasm. The protein resides in the cytoskeleton. Functionally, structural protein of the cytoskeleton. This is Smoothelin (SMTN) from Homo sapiens (Human).